The sequence spans 140 residues: NADPH-dependent 7-cyano-7-deazaguanine reductase (140 aa).

The active-site Thioimide intermediate is the Cys-51. Asp-58 functions as the Proton donor in the catalytic mechanism. Substrate is bound by residues 73-75 (LES) and 92-93 (HE).

This sequence belongs to the GTP cyclohydrolase I family. QueF type 1 subfamily.

It localises to the cytoplasm. It carries out the reaction 7-aminomethyl-7-carbaguanine + 2 NADP(+) = 7-cyano-7-deazaguanine + 2 NADPH + 3 H(+). Its pathway is tRNA modification; tRNA-queuosine biosynthesis. Its function is as follows. Catalyzes the NADPH-dependent reduction of 7-cyano-7-deazaguanine (preQ0) to 7-aminomethyl-7-deazaguanine (preQ1). This is NADPH-dependent 7-cyano-7-deazaguanine reductase from Syntrophus aciditrophicus (strain SB).